We begin with the raw amino-acid sequence, 149 residues long: Large-conductance mechanosensitive channel (149 aa).

3 consecutive transmembrane segments (helical) span residues 16–36 (VMDL…VNSV), 40–60 (LIMP…KFIL), and 89–109 (GSFI…FMMV).

It belongs to the MscL family. As to quaternary structure, homopentamer.

It localises to the cell inner membrane. In terms of biological role, channel that opens in response to stretch forces in the membrane lipid bilayer. May participate in the regulation of osmotic pressure changes within the cell. This chain is Large-conductance mechanosensitive channel, found in Paraburkholderia phymatum (strain DSM 17167 / CIP 108236 / LMG 21445 / STM815) (Burkholderia phymatum).